The chain runs to 634 residues: Kelch-like protein 22 (634 aa).

Alanine 2 carries the post-translational modification N-acetylalanine. Residues 50 to 117 (FDVVLVVEGR…IYTSELELSL (68 aa)) form the BTB domain. Kelch repeat units lie at residues 299-349 (CVVG…VLNN), 350-399 (FVYL…VVGR), 400-446 (YIYA…TLEG), 448-493 (MYVT…TLLD), 494-544 (KLYV…VLDT), and 545-593 (RIYV…VLTL). Position 463 is a phosphothreonine (threonine 463). Phosphotyrosine is present on tyrosine 466. The interval 600 to 634 (EPPRGTPDRSQADPDFASEVMSVSDWEEFDNSSED) is disordered. A Phosphothreonine modification is found at threonine 605. The span at 624–634 (DWEEFDNSSED) shows a compositional bias: acidic residues.

As to quaternary structure, component of the BCR(KLHL22) E3 ubiquitin ligase complex, at least composed of CUL3, KLHL22 and RBX1. Interacts with PLK1. Interacts with DEPDC5 (via DEP domain); the interaction depends on amino acid availability. Interacts with YWHAE; required for the nuclear localization of KLHL22 upon amino acid starvation.

It localises to the cytoplasm. Its subcellular location is the cytosol. The protein resides in the cytoskeleton. The protein localises to the microtubule organizing center. It is found in the centrosome. It localises to the spindle. Its subcellular location is the nucleus. The protein resides in the lysosome. The protein operates within protein modification; protein ubiquitination. Functionally, substrate-specific adapter of a BCR (BTB-CUL3-RBX1) E3 ubiquitin ligase complex required for chromosome alignment and localization of PLK1 at kinetochores. The BCR(KLHL22) ubiquitin ligase complex mediates monoubiquitination of PLK1, leading to PLK1 dissociation from phosphoreceptor proteins and subsequent removal from kinetochores, allowing silencing of the spindle assembly checkpoint (SAC) and chromosome segregation. Monoubiquitination of PLK1 does not lead to PLK1 degradation. The BCR(KLHL22) ubiquitin ligase complex is also responsible for the amino acid-stimulated 'Lys-48' polyubiquitination and proteasomal degradation of DEPDC5. Through the degradation of DEPDC5, releases the GATOR1 complex-mediated inhibition of the TORC1 pathway. It is therefore an amino acid-dependent activator within the amino acid-sensing branch of the TORC1 pathway, indirectly regulating different cellular processes including cell growth and autophagy. The polypeptide is Kelch-like protein 22 (KLHL22) (Ailuropoda melanoleuca (Giant panda)).